We begin with the raw amino-acid sequence, 258 residues long: Phosphate import ATP-binding protein PstB (258 aa).

An ABC transporter domain is found at Ile5–Gln247. Gly37–Ser44 serves as a coordination point for ATP.

Belongs to the ABC transporter superfamily. Phosphate importer (TC 3.A.1.7) family. In terms of assembly, the complex is composed of two ATP-binding proteins (PstB), two transmembrane proteins (PstC and PstA) and a solute-binding protein (PstS).

It localises to the cell membrane. It catalyses the reaction phosphate(out) + ATP + H2O = ADP + 2 phosphate(in) + H(+). Part of the ABC transporter complex PstSACB involved in phosphate import. Responsible for energy coupling to the transport system. The protein is Phosphate import ATP-binding protein PstB of Streptomyces avermitilis (strain ATCC 31267 / DSM 46492 / JCM 5070 / NBRC 14893 / NCIMB 12804 / NRRL 8165 / MA-4680).